A 150-amino-acid chain; its full sequence is Small ribosomal subunit protein uS11 (150 aa).

Belongs to the universal ribosomal protein uS11 family. In terms of assembly, part of the 30S ribosomal subunit. Interacts with proteins S7 and S18. Binds to IF-3.

In terms of biological role, located on the platform of the 30S subunit, it bridges several disparate RNA helices of the 16S rRNA. Forms part of the Shine-Dalgarno cleft in the 70S ribosome. This Pelagibacter ubique (strain HTCC1062) protein is Small ribosomal subunit protein uS11.